The chain runs to 81 residues: Putative membrane protein insertion efficiency factor (81 aa).

This sequence belongs to the UPF0161 family.

It is found in the cell inner membrane. In terms of biological role, could be involved in insertion of integral membrane proteins into the membrane. The chain is Putative membrane protein insertion efficiency factor from Legionella pneumophila subsp. pneumophila (strain Philadelphia 1 / ATCC 33152 / DSM 7513).